Reading from the N-terminus, the 131-residue chain is uncharacterized protein (131 aa).

Transmembrane regions (helical) follow at residues 52 to 72 and 97 to 117; these read LIMI…FYLV and SDII…YDVG.

The protein localises to the membrane. This is an uncharacterized protein from Acanthamoeba polyphaga mimivirus (APMV).